We begin with the raw amino-acid sequence, 197 residues long: Predicted GPI-anchored protein 34 (197 aa).

An N-terminal signal peptide occupies residues M1–A20. N-linked (GlcNAc...) asparagine glycosylation is found at N110, N114, and N152. Residue G169 is the site of GPI-anchor amidated glycine attachment. A propeptide spans A170–L197 (removed in mature form).

It is found in the cell membrane. Predicted GPI-anchored protein which may have a role during host infection. The protein is Predicted GPI-anchored protein 34 (PGA34) of Candida albicans (strain SC5314 / ATCC MYA-2876) (Yeast).